We begin with the raw amino-acid sequence, 179 residues long: ATP synthase subunit delta (179 aa).

It belongs to the ATPase delta chain family. As to quaternary structure, F-type ATPases have 2 components, F(1) - the catalytic core - and F(0) - the membrane proton channel. F(1) has five subunits: alpha(3), beta(3), gamma(1), delta(1), epsilon(1). F(0) has three main subunits: a(1), b(2) and c(10-14). The alpha and beta chains form an alternating ring which encloses part of the gamma chain. F(1) is attached to F(0) by a central stalk formed by the gamma and epsilon chains, while a peripheral stalk is formed by the delta and b chains.

It is found in the cell inner membrane. F(1)F(0) ATP synthase produces ATP from ADP in the presence of a proton or sodium gradient. F-type ATPases consist of two structural domains, F(1) containing the extramembraneous catalytic core and F(0) containing the membrane proton channel, linked together by a central stalk and a peripheral stalk. During catalysis, ATP synthesis in the catalytic domain of F(1) is coupled via a rotary mechanism of the central stalk subunits to proton translocation. Functionally, this protein is part of the stalk that links CF(0) to CF(1). It either transmits conformational changes from CF(0) to CF(1) or is implicated in proton conduction. The sequence is that of ATP synthase subunit delta from Burkholderia lata (strain ATCC 17760 / DSM 23089 / LMG 22485 / NCIMB 9086 / R18194 / 383).